The sequence spans 96 residues: Large ribosomal subunit protein bL27 (96 aa).

A propeptide spanning residues 1–10 (MLLKLNIQLF) is cleaved from the precursor.

The protein belongs to the bacterial ribosomal protein bL27 family. In terms of processing, the N-terminus is cleaved by ribosomal processing cysteine protease Prp.

This chain is Large ribosomal subunit protein bL27, found in Phytoplasma mali (strain AT).